Here is a 166-residue protein sequence, read N- to C-terminus: Probable tyrosine-protein phosphatase DG1060 (166 aa).

Residues 9–162 (NFGMVADDLY…LVTYNNAPQW (154 aa)) form the Tyrosine-protein phosphatase domain. The active-site Phosphocysteine intermediate is Cys-101.

It belongs to the protein-tyrosine phosphatase family.

The protein resides in the cytoplasm. It catalyses the reaction O-phospho-L-tyrosyl-[protein] + H2O = L-tyrosyl-[protein] + phosphate. The sequence is that of Probable tyrosine-protein phosphatase DG1060 (DG1060) from Dictyostelium discoideum (Social amoeba).